A 215-amino-acid polypeptide reads, in one-letter code: Glutathione S-transferase-like protein (215 aa).

Residues 1 to 76 (MPNARILKIQ…YVAASGPAAP (76 aa)) enclose the GST N-terminal domain. Residues 82–215 (NVAEQAAVRQ…LVAVRKEASV (134 aa)) enclose the GST C-terminal domain.

It belongs to the GST superfamily.

This is Glutathione S-transferase-like protein from Aspergillus aculeatus (strain ATCC 16872 / CBS 172.66 / WB 5094).